Reading from the N-terminus, the 374-residue chain is Peptide chain release factor 2 (374 aa).

Gln249 is modified (N5-methylglutamine).

Belongs to the prokaryotic/mitochondrial release factor family. Methylated by PrmC. Methylation increases the termination efficiency of RF2.

The protein resides in the cytoplasm. Peptide chain release factor 2 directs the termination of translation in response to the peptide chain termination codons UGA and UAA. This Ruegeria sp. (strain TM1040) (Silicibacter sp.) protein is Peptide chain release factor 2.